The chain runs to 364 residues: Fructose-bisphosphate aldolase A (364 aa).

At tyrosine 5 the chain carries Phosphotyrosine. A Phosphothreonine modification is found at threonine 9. Phosphoserine occurs at positions 36 and 39. Lysine 42 carries the post-translational modification N6-acetyllysine; alternate. Lysine 42 participates in a covalent cross-link: Glycyl lysine isopeptide (Lys-Gly) (interchain with G-Cter in SUMO1); alternate. Residue lysine 42 forms a Glycyl lysine isopeptide (Lys-Gly) (interchain with G-Cter in SUMO2); alternate linkage. Residue arginine 43 participates in beta-D-fructose 1,6-bisphosphate binding. Phosphoserine is present on serine 46. Lysine 99 is subject to N6-(2-hydroxyisobutyryl)lysine. An N6-acetyllysine modification is found at lysine 108. Lysine 111 bears the N6-acetyllysine; alternate mark. Lysine 111 bears the N6-malonyllysine; alternate mark. A Phosphoserine modification is found at serine 132. Residue lysine 147 is modified to N6-(2-hydroxyisobutyryl)lysine. The Proton acceptor role is filled by glutamate 188. Lysine 230 serves as the catalytic Schiff-base intermediate with dihydroxyacetone-P. Serine 272 is subject to Phosphoserine. Residues 272 to 274, serine 301, and arginine 304 contribute to the beta-D-fructose 1,6-bisphosphate site; that span reads SGG. The residue at position 312 (lysine 312) is an N6-malonyllysine. N6-acetyllysine is present on lysine 330.

Belongs to the class I fructose-bisphosphate aldolase family. Homotetramer. Interacts with SNX9 and WAS. Interacts with FBP2; the interaction blocks FBP2 inhibition by physiological concentrations of AMP and reduces inhibition by Ca(2+).

It is found in the cytoplasm. Its subcellular location is the myofibril. The protein localises to the sarcomere. The protein resides in the i band. It localises to the m line. The catalysed reaction is beta-D-fructose 1,6-bisphosphate = D-glyceraldehyde 3-phosphate + dihydroxyacetone phosphate. The protein operates within carbohydrate degradation; glycolysis; D-glyceraldehyde 3-phosphate and glycerone phosphate from D-glucose: step 4/4. Functionally, catalyzes the reversible conversion of beta-D-fructose 1,6-bisphosphate (FBP) into two triose phosphate and plays a key role in glycolysis and gluconeogenesis. In addition, may also function as scaffolding protein. In Homo sapiens (Human), this protein is Fructose-bisphosphate aldolase A.